The primary structure comprises 620 residues: Sodium-dependent dopamine transporter (620 aa).

The Cytoplasmic segment spans residues 1 to 56 (MSKSKCSVGLMSSVVAPAKEPNAVGPKEVELILVKEQNGVQLTSSTLTNPRQSPVE). The chain crosses the membrane as a discontinuously helical span at residues 57–95 (AQDRETWGKKIDFLLSVIGFAVDLANVWRFPYLCYKNGG). 5 residues coordinate Na(+): Gly-75, Ala-77, Val-78, Asp-79, and Asn-82. Asp-79 contacts dopamine. The next 2 helical transmembrane spans lie at 96-127 (GAFL…NREG) and 128-171 (AAGV…FSSF). Dopamine-binding residues include Ser-149 and Gly-153. The Extracellular segment spans residues 172-236 (TTELPWIHCN…SHGIDDLGPP (65 aa)). The cysteines at positions 180 and 189 are disulfide-linked. 3 N-linked (GlcNAc...) asparagine glycosylation sites follow: Asn-181, Asn-188, and Asn-205. Transmembrane regions (helical) follow at residues 237–256 (RWQL…FSLW) and 257–287 (KGVK…GVTL). The Extracellular portion of the chain corresponds to 288 to 306 (PGAIDGIRAYLSVDFYRLC). The chain crosses the membrane as a discontinuously helical span at residues 307-335 (EASVWIDAATQVCFSLGVGFGVLIAFSSY). Residue Gln-317 coordinates chloride. Phe-320 contacts dopamine. The Na(+) site is built by Ser-321 and Asn-353. Ser-321 is a binding site for chloride. A helical transmembrane segment spans residues 336–376 (NKFTNNCYRDAIVTTSINSLTSFSSGFVVFSFLGYMAQKHS). Ser-357 contacts chloride. The Extracellular portion of the chain corresponds to 377–400 (VPIGDVAKDGPGLIFIIYPEAIAT). 3 helical membrane-spanning segments follow: residues 401–442 (LPLS…QLLH), 443–466 (RHRE…CVTN), and 467–499 (GGIY…AWFY). Leu-418, Asp-421, and Ser-422 together coordinate Na(+). Dopamine contacts are provided by Ser-422 and Ala-423. The Cytoplasmic portion of the chain corresponds to 500 to 516 (GVGQFSDDIQQMTGQRP). Residues 517–542 (SLYWRLCWKLVSPCFLLFVVVVSIVT) form a helical membrane-spanning segment. The Extracellular segment spans residues 543–553 (FRPPHYGAYIF). Residues 554–583 (PDWANALGWVIATSSMAMVPIYAAYKFCSL) traverse the membrane as a helical segment. The segment at 561–590 (GWVIATSSMAMVPIYAAYKFCSLPGSFREK) is interaction with TGFB1I1. At 584–620 (PGSFREKLAYAIAPEKDRELVDRGEVRQFTLRHWLKV) the chain is on the cytoplasmic side.

It belongs to the sodium:neurotransmitter symporter (SNF) (TC 2.A.22) family. SLC6A3 subfamily. Monomer. Homooligomer; disulfide-linked. Interacts with PRKCABP and TGFB1I1. Interacts (via N-terminus) with SYNGR3 (via N-terminus). Interacts with SLC18A2. Interacts with TOR1A (ATP-bound); TOR1A regulates SLC6A3 subcellular location. Interacts with alpha-synuclein/SNCA. Interacts with SEPTIN4. In terms of tissue distribution, highly expressed in substantia nigra. Expressed in axonal varicosities in dopaminergic nerve terminals (at protein level). Expressed in the striatum (at protein level).

It localises to the cell membrane. It is found in the cell projection. The protein localises to the neuron projection. Its subcellular location is the axon. The catalysed reaction is dopamine(out) + chloride(out) + Na(+)(out) = dopamine(in) + chloride(in) + Na(+)(in). The enzyme catalyses dopamine(out) + chloride(out) + 2 Na(+)(out) = dopamine(in) + chloride(in) + 2 Na(+)(in). It carries out the reaction (R)-noradrenaline(out) + chloride(out) + Na(+)(out) = (R)-noradrenaline(in) + chloride(in) + Na(+)(in). With respect to regulation, inhibited by cocaine, which occupies the same binding site as dopamine. Inhibited by zinc ions. Enhanced by the antibiotic valinomycin. Inhibited by benztropine. Inhibited by GBR 12909 dihydrochloride and amphetamine. Inhibited by mazindol, GBR 12783 dihydrochloride, nomifensine, diclofensine, amfonelic acid, Lu 19005, Win-35428, bupropion and ritalin. Its function is as follows. Mediates sodium- and chloride-dependent transport of dopamine. Also mediates sodium- and chloride-dependent transport of norepinephrine (also known as noradrenaline). Regulator of light-dependent retinal hyaloid vessel regression, downstream of OPN5 signaling. The sequence is that of Sodium-dependent dopamine transporter (SLC6A3) from Homo sapiens (Human).